We begin with the raw amino-acid sequence, 398 residues long: UDP-N-acetylglucosamine--N-acetylmuramyl-(pentapeptide) pyrophosphoryl-undecaprenol N-acetylglucosamine transferase (398 aa).

Residues 11-13, Asn-124, Arg-164, Ser-192, and Gln-318 each bind UDP-N-acetyl-alpha-D-glucosamine; that span reads TGG.

The protein belongs to the glycosyltransferase 28 family. MurG subfamily.

The protein localises to the cell membrane. The catalysed reaction is di-trans,octa-cis-undecaprenyl diphospho-N-acetyl-alpha-D-muramoyl-L-alanyl-D-glutamyl-meso-2,6-diaminopimeloyl-D-alanyl-D-alanine + UDP-N-acetyl-alpha-D-glucosamine = di-trans,octa-cis-undecaprenyl diphospho-[N-acetyl-alpha-D-glucosaminyl-(1-&gt;4)]-N-acetyl-alpha-D-muramoyl-L-alanyl-D-glutamyl-meso-2,6-diaminopimeloyl-D-alanyl-D-alanine + UDP + H(+). It functions in the pathway cell wall biogenesis; peptidoglycan biosynthesis. In terms of biological role, cell wall formation. Catalyzes the transfer of a GlcNAc subunit on undecaprenyl-pyrophosphoryl-MurNAc-pentapeptide (lipid intermediate I) to form undecaprenyl-pyrophosphoryl-MurNAc-(pentapeptide)GlcNAc (lipid intermediate II). This is UDP-N-acetylglucosamine--N-acetylmuramyl-(pentapeptide) pyrophosphoryl-undecaprenol N-acetylglucosamine transferase from Deinococcus radiodurans (strain ATCC 13939 / DSM 20539 / JCM 16871 / CCUG 27074 / LMG 4051 / NBRC 15346 / NCIMB 9279 / VKM B-1422 / R1).